The primary structure comprises 508 residues: Pyruvate kinase (508 aa).

Substrate is bound at residue Arg56. Asn58, Ser60, Asp90, and Thr91 together coordinate K(+). An ATP-binding site is contributed by 58-61 (NFSH). Residues Arg97 and Lys185 each coordinate ATP. Mg(2+) is bound at residue Glu251. Residues Gly274, Asp275, and Thr307 each contribute to the substrate site. Asp275 contributes to the Mg(2+) binding site.

This sequence belongs to the pyruvate kinase family. As to quaternary structure, homotetramer. It depends on Mg(2+) as a cofactor. K(+) is required as a cofactor.

The enzyme catalyses pyruvate + ATP = phosphoenolpyruvate + ADP + H(+). It participates in carbohydrate degradation; glycolysis; pyruvate from D-glyceraldehyde 3-phosphate: step 5/5. Its activity is regulated as follows. Regulated by phosphoenolpyruvate substrate and is allosterically activated by ribose-5-phosphate, AMP and other nucleoside monophosphates but not by fructose-1,6-bisphosphate. This chain is Pyruvate kinase (pyk), found in Mycoplasma genitalium (strain ATCC 33530 / DSM 19775 / NCTC 10195 / G37) (Mycoplasmoides genitalium).